The sequence spans 470 residues: Glutamate--tRNA ligase (470 aa).

The short motif at 9–19 (PSPTGFLHVGG) is the 'HIGH' region element. The short motif at 236–240 (RLSKR) is the 'KMSKS' region element. Lysine 239 contributes to the ATP binding site.

The protein belongs to the class-I aminoacyl-tRNA synthetase family. Glutamate--tRNA ligase type 1 subfamily. In terms of assembly, monomer.

It localises to the cytoplasm. The catalysed reaction is tRNA(Glu) + L-glutamate + ATP = L-glutamyl-tRNA(Glu) + AMP + diphosphate. Catalyzes the attachment of glutamate to tRNA(Glu) in a two-step reaction: glutamate is first activated by ATP to form Glu-AMP and then transferred to the acceptor end of tRNA(Glu). The chain is Glutamate--tRNA ligase from Legionella pneumophila (strain Paris).